A 582-amino-acid chain; its full sequence is Proline--tRNA ligase (582 aa).

This sequence belongs to the class-II aminoacyl-tRNA synthetase family. ProS type 1 subfamily. Homodimer.

Its subcellular location is the cytoplasm. The catalysed reaction is tRNA(Pro) + L-proline + ATP = L-prolyl-tRNA(Pro) + AMP + diphosphate. In terms of biological role, catalyzes the attachment of proline to tRNA(Pro) in a two-step reaction: proline is first activated by ATP to form Pro-AMP and then transferred to the acceptor end of tRNA(Pro). As ProRS can inadvertently accommodate and process non-cognate amino acids such as alanine and cysteine, to avoid such errors it has two additional distinct editing activities against alanine. One activity is designated as 'pretransfer' editing and involves the tRNA(Pro)-independent hydrolysis of activated Ala-AMP. The other activity is designated 'posttransfer' editing and involves deacylation of mischarged Ala-tRNA(Pro). The misacylated Cys-tRNA(Pro) is not edited by ProRS. The protein is Proline--tRNA ligase of Mycolicibacterium paratuberculosis (strain ATCC BAA-968 / K-10) (Mycobacterium paratuberculosis).